The following is a 316-amino-acid chain: Adenine deaminase (316 aa).

Positions 14, 16, and 194 each coordinate Zn(2+). Glutamate 197 serves as the catalytic Proton donor. Residue aspartate 275 participates in Zn(2+) binding. Aspartate 276 serves as a coordination point for substrate.

The protein belongs to the metallo-dependent hydrolases superfamily. Adenosine and AMP deaminases family. Adenine deaminase type 2 subfamily. It depends on Zn(2+) as a cofactor.

It carries out the reaction adenine + H2O + H(+) = hypoxanthine + NH4(+). Functionally, catalyzes the hydrolytic deamination of adenine to hypoxanthine. Plays an important role in the purine salvage pathway and in nitrogen catabolism. The sequence is that of Adenine deaminase from Pseudomonas entomophila (strain L48).